The following is a 229-amino-acid chain: Uracil-DNA glycosylase (229 aa).

The Proton acceptor role is filled by D65.

It belongs to the uracil-DNA glycosylase (UDG) superfamily. UNG family.

The protein localises to the cytoplasm. The enzyme catalyses Hydrolyzes single-stranded DNA or mismatched double-stranded DNA and polynucleotides, releasing free uracil.. In terms of biological role, excises uracil residues from the DNA which can arise as a result of misincorporation of dUMP residues by DNA polymerase or due to deamination of cytosine. In Latilactobacillus sakei subsp. sakei (strain 23K) (Lactobacillus sakei subsp. sakei), this protein is Uracil-DNA glycosylase.